A 110-amino-acid chain; its full sequence is Large ribosomal subunit protein uL22 (110 aa).

This sequence belongs to the universal ribosomal protein uL22 family. Part of the 50S ribosomal subunit.

In terms of biological role, this protein binds specifically to 23S rRNA; its binding is stimulated by other ribosomal proteins, e.g. L4, L17, and L20. It is important during the early stages of 50S assembly. It makes multiple contacts with different domains of the 23S rRNA in the assembled 50S subunit and ribosome. The globular domain of the protein is located near the polypeptide exit tunnel on the outside of the subunit, while an extended beta-hairpin is found that lines the wall of the exit tunnel in the center of the 70S ribosome. This is Large ribosomal subunit protein uL22 from Acinetobacter baylyi (strain ATCC 33305 / BD413 / ADP1).